The primary structure comprises 396 residues: S-arrestin (396 aa).

The protein belongs to the arrestin family.

Its function is as follows. Arrestin is one of the major proteins of the ros (retinal rod outer segments); it binds to photoactivated-phosphorylated rhodopsin, thereby apparently preventing the transducin-mediated activation of phosphodiesterase. The chain is S-arrestin from Lithobates pipiens (Northern leopard frog).